A 93-amino-acid polypeptide reads, in one-letter code: MSITPAKKSELISEYKVKDGDTGSAYVQCAILSERIRNLTEHLKVHKKDFHCRRGLMVLVCKRRKGLQYVRNKYGNDAYLDLVKRLGIRDVFH.

This sequence belongs to the universal ribosomal protein uS15 family. In terms of assembly, part of the 30S ribosomal subunit. Forms a bridge to the 50S subunit in the 70S ribosome, contacting the 23S rRNA.

One of the primary rRNA binding proteins, it binds directly to 16S rRNA where it helps nucleate assembly of the platform of the 30S subunit by binding and bridging several RNA helices of the 16S rRNA. In terms of biological role, forms an intersubunit bridge (bridge B4) with the 23S rRNA of the 50S subunit in the ribosome. The sequence is that of Small ribosomal subunit protein uS15 from Anaplasma marginale (strain Florida).